The sequence spans 420 residues: Innexin-3 (420 aa).

Transmembrane regions (helical) follow at residues 33-53, 104-124, 193-213, and 278-298; these read ATLL…GSAI, WVPI…WIWS, MLYI…FIIL, and IYLF…INTL. The interval 378-405 is disordered; it reads NRDFHHGHSTKSTSPGLEEGHHEHLYTP. A compositionally biased stretch (basic and acidic residues) spans 395-405; sequence EEGHHEHLYTP.

This sequence belongs to the pannexin family. Interacts with F-actin. As to expression, evenly distributed along the adjoining membranes of the two pm5 pharyngeal muscle cells.

The protein localises to the cell membrane. Its subcellular location is the cell junction. The protein resides in the gap junction. In terms of biological role, structural component of gap junctions. Plays a role in maintaining gap junction activity to promote phayngeal muscle contraction. The chain is Innexin-3 from Caenorhabditis elegans.